We begin with the raw amino-acid sequence, 339 residues long: Lipoyl synthase (339 aa).

The tract at residues Arg-13 to Ile-35 is disordered. The [4Fe-4S] cluster site is built by Cys-68, Cys-73, Cys-79, Cys-94, Cys-98, Cys-101, and Ser-307. The Radical SAM core domain maps to Trp-80–Leu-296.

Belongs to the radical SAM superfamily. Lipoyl synthase family. [4Fe-4S] cluster is required as a cofactor.

The protein resides in the cytoplasm. The catalysed reaction is [[Fe-S] cluster scaffold protein carrying a second [4Fe-4S](2+) cluster] + N(6)-octanoyl-L-lysyl-[protein] + 2 oxidized [2Fe-2S]-[ferredoxin] + 2 S-adenosyl-L-methionine + 4 H(+) = [[Fe-S] cluster scaffold protein] + N(6)-[(R)-dihydrolipoyl]-L-lysyl-[protein] + 4 Fe(3+) + 2 hydrogen sulfide + 2 5'-deoxyadenosine + 2 L-methionine + 2 reduced [2Fe-2S]-[ferredoxin]. It functions in the pathway protein modification; protein lipoylation via endogenous pathway; protein N(6)-(lipoyl)lysine from octanoyl-[acyl-carrier-protein]: step 2/2. In terms of biological role, catalyzes the radical-mediated insertion of two sulfur atoms into the C-6 and C-8 positions of the octanoyl moiety bound to the lipoyl domains of lipoate-dependent enzymes, thereby converting the octanoylated domains into lipoylated derivatives. The sequence is that of Lipoyl synthase from Methylorubrum extorquens (strain PA1) (Methylobacterium extorquens).